A 124-amino-acid polypeptide reads, in one-letter code: Small ribosomal subunit protein uS12 (124 aa).

D89 bears the 3-methylthioaspartic acid mark.

This sequence belongs to the universal ribosomal protein uS12 family. As to quaternary structure, part of the 30S ribosomal subunit. Contacts proteins S8 and S17. May interact with IF1 in the 30S initiation complex.

Functionally, with S4 and S5 plays an important role in translational accuracy. Interacts with and stabilizes bases of the 16S rRNA that are involved in tRNA selection in the A site and with the mRNA backbone. Located at the interface of the 30S and 50S subunits, it traverses the body of the 30S subunit contacting proteins on the other side and probably holding the rRNA structure together. The combined cluster of proteins S8, S12 and S17 appears to hold together the shoulder and platform of the 30S subunit. This chain is Small ribosomal subunit protein uS12, found in Caldanaerobacter subterraneus subsp. tengcongensis (strain DSM 15242 / JCM 11007 / NBRC 100824 / MB4) (Thermoanaerobacter tengcongensis).